A 138-amino-acid chain; its full sequence is ATP synthase epsilon chain (138 aa).

It belongs to the ATPase epsilon chain family. F-type ATPases have 2 components, CF(1) - the catalytic core - and CF(0) - the membrane proton channel. CF(1) has five subunits: alpha(3), beta(3), gamma(1), delta(1), epsilon(1). CF(0) has three main subunits: a, b and c.

It is found in the cell inner membrane. In terms of biological role, produces ATP from ADP in the presence of a proton gradient across the membrane. The protein is ATP synthase epsilon chain of Idiomarina loihiensis (strain ATCC BAA-735 / DSM 15497 / L2-TR).